A 298-amino-acid chain; its full sequence is MNALTLPDIARQTTLSTLPLDWVGMQGIALPVQVAGQTVAAEADAGVSLDDPQARGIHMSRLYLALAGLEDGELDLPRLRGVLQRFLDSHADLSRRAYLRLRLAPLLRRPALVSPLSGWKRYPLVLDTRLENGTFQADLHLELTYSSTCPCSAALARQLIQERFAQDFAGQQPDHATILAWLGSSDGIVATPHSQRSSAQLRIGLAEDCAGLPLEELADLGECALGTAVQTAVKRADEQAFALANGQNLMFCEDAVRRLHRALRGYPQAREFSVRVVHAESLHAHDAVAESHWQRGAA.

The protein belongs to the GTP cyclohydrolase IV family.

It carries out the reaction GTP + H2O = 7,8-dihydroneopterin 3'-triphosphate + formate + H(+). It participates in cofactor biosynthesis; 7,8-dihydroneopterin triphosphate biosynthesis; 7,8-dihydroneopterin triphosphate from GTP: step 1/1. Its function is as follows. Converts GTP to 7,8-dihydroneopterin triphosphate. In Pseudomonas paraeruginosa (strain DSM 24068 / PA7) (Pseudomonas aeruginosa (strain PA7)), this protein is GTP cyclohydrolase FolE2.